The primary structure comprises 186 residues: ATP synthase subunit delta, chloroplastic (186 aa).

The protein belongs to the ATPase delta chain family. F-type ATPases have 2 components, F(1) - the catalytic core - and F(0) - the membrane proton channel. F(1) has five subunits: alpha(3), beta(3), gamma(1), delta(1), epsilon(1). CF(0) has four main subunits: a(1), b(1), b'(1) and c(10-14). The alpha and beta chains form an alternating ring which encloses part of the gamma chain. F(1) is attached to F(0) by a central stalk formed by the gamma and epsilon chains, while a peripheral stalk is formed by the delta, b and b' chains.

The protein resides in the plastid. It is found in the chloroplast thylakoid membrane. F(1)F(0) ATP synthase produces ATP from ADP in the presence of a proton or sodium gradient. F-type ATPases consist of two structural domains, F(1) containing the extramembraneous catalytic core and F(0) containing the membrane proton channel, linked together by a central stalk and a peripheral stalk. During catalysis, ATP synthesis in the catalytic domain of F(1) is coupled via a rotary mechanism of the central stalk subunits to proton translocation. Its function is as follows. This protein is part of the stalk that links CF(0) to CF(1). It either transmits conformational changes from CF(0) to CF(1) or is implicated in proton conduction. The sequence is that of ATP synthase subunit delta, chloroplastic from Pyropia yezoensis (Susabi-nori).